The primary structure comprises 528 residues: Probable cyclic di-GMP phosphodiesterase PdeC (528 aa).

Helical transmembrane passes span 14 to 34 (GIIFLVLFPIILSLWIAFLWA) and 242 to 262 (HLIFALPAGILGSLVLLLLWL). In terms of domain architecture, EAL spans 268 to 520 (YLSPKRKLQR…VFMQWMEQLP (253 aa)).

It localises to the cell inner membrane. The enzyme catalyses 3',3'-c-di-GMP + H2O = 5'-phosphoguanylyl(3'-&gt;5')guanosine + H(+). Functionally, phosphodiesterase (PDE) that catalyzes the hydrolysis of cyclic-di-GMP (c-di-GMP) to 5'-pGpG. Cyclic-di-GMP is a second messenger which controls cell surface-associated traits in bacteria. Overexpression reduces biofilm formation. The polypeptide is Probable cyclic di-GMP phosphodiesterase PdeC (Escherichia coli (strain K12)).